We begin with the raw amino-acid sequence, 955 residues long: MASLRLPRANPLAFTRWPVTVITAIVYLALLIPLLVVHHVVPSAPSSPPSGLNISEAWADLQVLTNGFHPYNSRRNDVIHSWLLRRINEILDSTPLEQEYRALDEEKPDVFVFDDVYSNLTTYGGTLKDADLGVYFEGTNVIVYIRGWEDDTEHWWEAPNGVPTSRGGVLVNSHYDSVSTGFGATDDGVGVVTCLQLVKYFTTPGHAPRRGLVVLFNNGEEDFLNGARVYSQHPISKLPHTFLNLEGAGAGGRATLFRSSDFEVTGPYMRSPHPFGSVLSANGFDTGLIASQTDYVIFQGNMGLRGLDVAFMEPRARYHTNQDDTRHTSKDSVWHMLSAAVATTEGLVSDSTDRFDGAPNTDGGVPSGSGSQAVWFDLFGSTFVLFQLHTLFALLVTLLIVGPLTLLFTSIALTKADKMYLFRSSAKSEDRLDVVPLQGLRGFFRFPFLFGIPTVVTVGLAYLVTKVNPYIIHSSAYAVWSMMVAAWVFLAWFVSRVADFARPSAFHRIYTLTWMYVLSWVSAVIATVYANQRGLAGGYFIFFFHAGIFLAKWISYLELFALPSKTEYANQLRSASGRASGHGSRRGTTSGEDDGEEAEEEPTESTSLLGSGQRTTFANYVRVGGDNHAVAEEEVIDPNVYGREQAWSYALPKWTWVLQLLLTAPITLIMVGPLALLTISAISQTGQDGGHPLFAYVAIAIFTTIMLTPLLPFIHRYTYHVPLFLLAVFLGTLIYNLVAFPFSDSNRLKLYYVQEVDLDTGVNSATFAGLSPFVKDVSQELPSAAGQTVSCEWHTKRRNLLSCSWEGIAPQPVEGDHPMKDWVSFNISKSTDKPQARFEVSGLNTRACRILFDTPVKNFHVAGSAYDPRFPYDAAGVNEIRLWSRTWENQWTVDVDWDEGALKGNVVCLWSDHNQPGVLPALDEAIQFLPVWAAVTKGSDGLVEGRRAFEIGNDD.

Over methionine 1–arginine 16 the chain is Cytoplasmic. A helical transmembrane segment spans residues tryptophan 17–valine 37. Topologically, residues histidine 38–threonine 390 are vacuolar. Asparagine 53 and asparagine 119 each carry an N-linked (GlcNAc...) asparagine glycan. Zn(2+)-binding residues include histidine 174 and aspartate 186. The active-site Proton acceptor is glutamate 220. Zn(2+)-binding residues include glutamate 221, glutamate 246, and histidine 319. The helical transmembrane segment at leucine 391–isoleucine 411 threads the bilayer. Over alanine 412–glycine 442 the chain is Cytoplasmic. Residues phenylalanine 443–leucine 463 traverse the membrane as a helical segment. The Vacuolar segment spans residues valine 464–histidine 473. Residues serine 474–valine 494 form a helical membrane-spanning segment. Residues serine 495–arginine 508 are Cytoplasmic-facing. A helical membrane pass occupies residues isoleucine 509 to tyrosine 529. Residues alanine 530–arginine 533 lie on the Vacuolar side of the membrane. The helical transmembrane segment at glycine 534–isoleucine 554 threads the bilayer. At serine 555 to tryptophan 656 the chain is on the cytoplasmic side. Low complexity predominate over residues serine 574–serine 590. The segment at serine 574–serine 611 is disordered. The span at glycine 591 to threonine 603 shows a compositional bias: acidic residues. Residues valine 657–leucine 677 traverse the membrane as a helical segment. The Vacuolar portion of the chain corresponds to threonine 678–leucine 693. The helical transmembrane segment at phenylalanine 694–isoleucine 714 threads the bilayer. Over histidine 715–valine 721 the chain is Cytoplasmic. The chain crosses the membrane as a helical span at residues proline 722–phenylalanine 742. The Vacuolar segment spans residues serine 743–aspartate 955. A glycan (N-linked (GlcNAc...) asparagine) is linked at asparagine 826.

It belongs to the peptidase M28 family. The cofactor is Zn(2+).

Its subcellular location is the vacuole membrane. Its function is as follows. May be involved in vacuolar sorting and osmoregulation. This chain is Vacuolar membrane protease, found in Aspergillus oryzae (strain ATCC 42149 / RIB 40) (Yellow koji mold).